Here is a 491-residue protein sequence, read N- to C-terminus: Chromosomal replication initiator protein DnaA (491 aa).

A domain I, interacts with DnaA modulators region spans residues 1 to 69 (MTTWDKCLKK…TIQECHGNDL (69 aa)). A domain II region spans residues 69-154 (LIIEYSNKKF…KEDEEYSFGL (86 aa)). Residues 155–371 (PLKEKYVFDS…GALNRVLTTS (217 aa)) form a domain III, AAA+ region region. ATP-binding residues include G199, G201, K202, and T203. Residues 372 to 491 (KFNHKDPTIE…YELLLDKISR (120 aa)) form a domain IV, binds dsDNA region.

This sequence belongs to the DnaA family. As to quaternary structure, oligomerizes as a right-handed, spiral filament on DNA at oriC.

The protein resides in the cytoplasm. Plays an essential role in the initiation and regulation of chromosomal replication. ATP-DnaA binds to the origin of replication (oriC) to initiate formation of the DNA replication initiation complex once per cell cycle. Binds the DnaA box (a 9 base pair repeat at the origin) and separates the double-stranded (ds)DNA. Forms a right-handed helical filament on oriC DNA; dsDNA binds to the exterior of the filament while single-stranded (ss)DNA is stabiized in the filament's interior. The ATP-DnaA-oriC complex binds and stabilizes one strand of the AT-rich DNA unwinding element (DUE), permitting loading of DNA polymerase. After initiation quickly degrades to an ADP-DnaA complex that is not apt for DNA replication. Binds acidic phospholipids. This chain is Chromosomal replication initiator protein DnaA, found in Francisella tularensis subsp. holarctica (strain OSU18).